Here is a 404-residue protein sequence, read N- to C-terminus: Tryptophan synthase beta chain (404 aa).

An N6-(pyridoxal phosphate)lysine modification is found at K98.

It belongs to the TrpB family. As to quaternary structure, tetramer of two alpha and two beta chains. Requires pyridoxal 5'-phosphate as cofactor.

The enzyme catalyses (1S,2R)-1-C-(indol-3-yl)glycerol 3-phosphate + L-serine = D-glyceraldehyde 3-phosphate + L-tryptophan + H2O. It participates in amino-acid biosynthesis; L-tryptophan biosynthesis; L-tryptophan from chorismate: step 5/5. In terms of biological role, the beta subunit is responsible for the synthesis of L-tryptophan from indole and L-serine. The polypeptide is Tryptophan synthase beta chain (Rhodopseudomonas palustris (strain BisB5)).